The primary structure comprises 21 residues: Ocellatin-3 (21 aa).

Isoleucine 21 carries the post-translational modification Isoleucine amide.

Expressed by the skin dorsal glands.

It is found in the secreted. Its function is as follows. Has hemolytic activity against human erythrocytes and antibacterial activity against the Gram-negative bacterium E.coli. The sequence is that of Ocellatin-3 from Leptodactylus ocellatus (Argus frog).